A 200-amino-acid polypeptide reads, in one-letter code: Dephospho-CoA kinase (200 aa).

Residues 4–200 (VIGLTGGIAS…AILKKWNIID (197 aa)) form the DPCK domain. 12 to 17 (ASGKST) provides a ligand contact to ATP.

This sequence belongs to the CoaE family.

It is found in the cytoplasm. It catalyses the reaction 3'-dephospho-CoA + ATP = ADP + CoA + H(+). The protein operates within cofactor biosynthesis; coenzyme A biosynthesis; CoA from (R)-pantothenate: step 5/5. Its function is as follows. Catalyzes the phosphorylation of the 3'-hydroxyl group of dephosphocoenzyme A to form coenzyme A. The polypeptide is Dephospho-CoA kinase (Bacillus anthracis).